Here is a 996-residue protein sequence, read N- to C-terminus: Poly [ADP-ribose] polymerase (996 aa).

The DNA-binding element occupies 1–369 (MEIDLPFKVE…TSTILKNISL (369 aa)). 2 consecutive PARP-type zinc fingers follow at residues 7-89 (FKVE…DNCT) and 114-203 (FGIE…PVIK). The Zn(2+) site is built by C19, C22, H51, C54, C126, C129, H161, and C164. 2 consecutive short sequence motifs (nuclear localization signal) follow at residues 211-214 (KKAK) and 232-235 (KIKK). Positions 220 to 358 (EEDAASIKEL…EVRAIRYIPP (139 aa)) constitute a PADR1 zinc-binding domain. Residues 286-329 (GALLPCTDCKGRQLLFHKSGYLCNGDLTEWTKCTKLLKEPERKS) are zinc ribbon. Positions 291, 294, 308, and 318 each coordinate Zn(2+). Positions 370–507 (KKGDELDGPK…SIYTKSVPKS (138 aa)) are automodification domain. The BRCT domain maps to 382-473 (RERPPLYNIE…AGAINYISSM (92 aa)). The 99-residue stretch at 527-625 (VAHVYVSRNK…ENFVKVAGRM (99 aa)) folds into the WGR domain. The PARP alpha-helical domain occupies 647–764 (KSKLPLSVQD…EIECAYSLLQ (118 aa)). The PARP catalytic domain occupies 773-996 (NPIDKHYEQL…YMLRMNFKYK (224 aa)).

It belongs to the ARTD/PARP family.

The protein resides in the nucleus. It catalyses the reaction NAD(+) + (ADP-D-ribosyl)n-acceptor = nicotinamide + (ADP-D-ribosyl)n+1-acceptor + H(+).. The catalysed reaction is L-aspartyl-[protein] + NAD(+) = 4-O-(ADP-D-ribosyl)-L-aspartyl-[protein] + nicotinamide. It carries out the reaction L-glutamyl-[protein] + NAD(+) = 5-O-(ADP-D-ribosyl)-L-glutamyl-[protein] + nicotinamide. In terms of biological role, poly-ADP-ribosyltransferase that mediates poly-ADP-ribosylation of proteins and plays a key role in DNA repair. Mainly mediates glutamate and aspartate ADP-ribosylation of target proteins: the ADP-D-ribosyl group of NAD(+) is transferred to the acceptor carboxyl group of glutamate and aspartate residues and further ADP-ribosyl groups are transferred to the 2'-position of the terminal adenosine moiety, building up a polymer with an average chain length of 20-30 units. The chain is Poly [ADP-ribose] polymerase from Sarcophaga peregrina (Flesh fly).